A 356-amino-acid chain; its full sequence is Protein MGF 360-3L (356 aa).

One copy of the ANK repeat lies at 61 to 93 (KLNTALVLAVKENNEDLIMLFTEWGANINYGLL).

It belongs to the asfivirus MGF 360 family.

Its function is as follows. Plays a role in virus cell tropism, and may be required for efficient virus replication in macrophages. The protein is Protein MGF 360-3L of African swine fever virus (isolate Warthog/Namibia/Wart80/1980) (ASFV).